A 1106-amino-acid polypeptide reads, in one-letter code: Carbamoyl phosphate synthase large chain (1106 aa).

The segment at 1–402 (MPRRQDLNSV…ALQKAMRSLE (402 aa)) is carboxyphosphate synthetic domain. Positions 129, 169, 175, 176, 208, 210, 215, 241, 242, 243, 285, and 299 each coordinate ATP. An ATP-grasp 1 domain is found at 133–328 (KGVVERCGAE…IAKIATKLSL (196 aa)). Mg(2+) contacts are provided by Gln285, Glu299, and Asn301. Mn(2+)-binding residues include Gln285, Glu299, and Asn301. The interval 403–550 (QKGSAFSFAR…YHYSSYDRET (148 aa)) is oligomerization domain. Positions 551–953 (EVAPHEKPSV…AFAKAQAAAG (403 aa)) are carbamoyl phosphate synthetic domain. In terms of domain architecture, ATP-grasp 2 spans 681-872 (ARVLTEAGLR…MAKAAALIGT (192 aa)). ATP is bound by residues Arg717, Lys756, Leu758, Glu763, Gly788, Ile789, His790, Ser791, Gln831, and Glu843. Gln831, Glu843, and Asn845 together coordinate Mg(2+). Mn(2+) is bound by residues Gln831, Glu843, and Asn845. The MGS-like domain occupies 954–1106 (GPLPTSGSLF…ERAAQEASRD (153 aa)). Positions 954-1106 (GPLPTSGSLF…ERAAQEASRD (153 aa)) are allosteric domain.

The protein belongs to the CarB family. Composed of two chains; the small (or glutamine) chain promotes the hydrolysis of glutamine to ammonia, which is used by the large (or ammonia) chain to synthesize carbamoyl phosphate. Tetramer of heterodimers (alpha,beta)4. Mg(2+) is required as a cofactor. Mn(2+) serves as cofactor.

The enzyme catalyses hydrogencarbonate + L-glutamine + 2 ATP + H2O = carbamoyl phosphate + L-glutamate + 2 ADP + phosphate + 2 H(+). The catalysed reaction is hydrogencarbonate + NH4(+) + 2 ATP = carbamoyl phosphate + 2 ADP + phosphate + 2 H(+). Its pathway is amino-acid biosynthesis; L-arginine biosynthesis; carbamoyl phosphate from bicarbonate: step 1/1. It functions in the pathway pyrimidine metabolism; UMP biosynthesis via de novo pathway; (S)-dihydroorotate from bicarbonate: step 1/3. Large subunit of the glutamine-dependent carbamoyl phosphate synthetase (CPSase). CPSase catalyzes the formation of carbamoyl phosphate from the ammonia moiety of glutamine, carbonate, and phosphate donated by ATP, constituting the first step of 2 biosynthetic pathways, one leading to arginine and/or urea and the other to pyrimidine nucleotides. The large subunit (synthetase) binds the substrates ammonia (free or transferred from glutamine from the small subunit), hydrogencarbonate and ATP and carries out an ATP-coupled ligase reaction, activating hydrogencarbonate by forming carboxy phosphate which reacts with ammonia to form carbamoyl phosphate. The polypeptide is Carbamoyl phosphate synthase large chain (Kocuria rhizophila (strain ATCC 9341 / DSM 348 / NBRC 103217 / DC2201)).